We begin with the raw amino-acid sequence, 281 residues long: ATP phosphoribosyltransferase (281 aa).

It belongs to the ATP phosphoribosyltransferase family. Long subfamily. Requires Mg(2+) as cofactor.

It localises to the cytoplasm. It carries out the reaction 1-(5-phospho-beta-D-ribosyl)-ATP + diphosphate = 5-phospho-alpha-D-ribose 1-diphosphate + ATP. It participates in amino-acid biosynthesis; L-histidine biosynthesis; L-histidine from 5-phospho-alpha-D-ribose 1-diphosphate: step 1/9. With respect to regulation, feedback inhibited by histidine. Catalyzes the condensation of ATP and 5-phosphoribose 1-diphosphate to form N'-(5'-phosphoribosyl)-ATP (PR-ATP). Has a crucial role in the pathway because the rate of histidine biosynthesis seems to be controlled primarily by regulation of HisG enzymatic activity. In Archaeoglobus fulgidus (strain ATCC 49558 / DSM 4304 / JCM 9628 / NBRC 100126 / VC-16), this protein is ATP phosphoribosyltransferase (hisG).